The sequence spans 1525 residues: MRVRGALQAAALLASALWASPLLAKDHPDFKTTKLDTQPNNLNYFQGSDTILFHDPHKANLWRSDDAGATWSVVKDIPDGKVARLYMHDFDPKRAFAITDGRKHYRTTDQGKTWKKFEINAEWDTERYDILHFHATDPDRIIFNGLNCLGFLCEEVSLYTIDGFDTPAKPLRPDTLGCWWAKSNALFTTGDSDLDKDRILCIIMGVDSIFTEDRRLVISDDFFKADKEGNIQEFEPNLAGDKPVRGVVNVAAVKRYFMVATTSANTDEMALFISTDTKKWQRAMFPNAHDDHDHKIVQEAYTVLESTNYSIQLNVMTGSKSQPMGIMFTSNYDGTYFTENLEYTNLNMYGHVDFEKIAGIQGIFLVNKVDNGKDVDEKPSTKKKLVSEITFDDGRTFEKVTADGKRIHLHSVTELNNVGRVFSSPAPGLVMANGNTGDYLEDYWDANLYVSDDAGKTWKKALKGPHKYEFGDQGSILVAVRDSKEEDVSEISYSLDHGENWVEEKLPDDLKIQPWILTTTPDSTTLQFVLIGKAKGAWQVIHIDFEALHEATCKDSDMEEWHARVDKDGESTCIMGHTQTFPRRKKDAKCFLKKEFKLAEVETKDCDCTDQDYECDYSFERNDKGNCVSKGPIPIPEGACKDGDKNGKFMGTSGYRKIPGNTCKDTKDTKDKYKDVERSCGDGIGAPPEEATGELQQVDTKGKFGHWTQWEKHYLERGESSSDSSETIIMRGKNRTVDDSGPKAGPIWRTTDHGKTWEKIDFFKDEEVISIVPHPTVKDWVFFLTEGKKLIYTPDRGKRFRTFDVPQPADLEAAANGIFPLIFHPDKPNWLIWLGKKCESKNDCYRVAYGTKDGERWETLARDVYRCEFTGAEAYGRKYANRALEQILCLKHEKEGASDSALQLVSSNDWFNKDEKVRLKDAKEFATMAEFIVVATEDTEKKTLRAHASLDGGLYSEAKFPFGFEVPHQHAYTVLDSSTHAVNLFVATKMEGDKSLGTILKSNSNGTSYVVSVKNVNCDQYFYVDFEKMVGLEGVALVNVVANPDAKSSAPQKLQTKITHNDGAQWAYLPTPSKDEFGRFPCSSSGTEKCALHIQGYTQRRDRGKTYSSEGAVGVMFGWGNVGDSLGPLKDADTFMTTDAGITWKRVKKGRWNWALGDQGSIIVMVPIRGQKTDTLEYSLDQGATWKKHTFSKEKVDIWDLTTTRSGNSQNFLIWGENSDGLFTTKIDFTKFTDHVCKYDPENLGKSDYQIFSPKHPLQPDGCLFGHVSQYLRKKPGLKCFNDFRLDPLYSKQNCTCTRSDFECDFNYELDNHGQCALVKGLKPQDPKLWCKEHPDEIEYYEPTGYRRIPLTTCQGGADFEKQAAVHPCPGHEDDFERKHRISGIAIFFAVVLPVAAASAIGWWVYRNWDGKFGQIRLGEQGASTMEFFDADRPWVKYPVIALSAVVALAGAMPLVLAAIWRTAKNTAQRFGVGGGGRGGWSRLDGGGASRTFRTRDSFARGRGDYTIVDEDEGELLGEESDEEV.

An N-terminal signal peptide occupies residues 1–24 (MRVRGALQAAALLASALWASPLLA). Topologically, residues 25-1384 (KDHPDFKTTK…DFERKHRISG (1360 aa)) are lumenal. BNR repeat units follow at residues 62–72 (WRSDDAGATWS) and 105–116 (YRTTDQGKTWKK). N-linked (GlcNAc...) asparagine glycosylation occurs at asparagine 308. BNR repeat units lie at residues 449–460 (YVSDDAGKTWKK) and 493–502 (YSLDHGENWV). Asparagine 734 carries N-linked (GlcNAc...) asparagine glycosylation. One copy of the BNR 5 repeat lies at 748-759 (WRTTDHGKTWEK). The N-linked (GlcNAc...) asparagine glycan is linked to asparagine 1005. BNR repeat units lie at residues 1135-1145 (FMTTDAGITWK) and 1178-1188 (YSLDQGATWKK). Residue asparagine 1294 is glycosylated (N-linked (GlcNAc...) asparagine). Residues 1385-1405 (IAIFFAVVLPVAAASAIGWWV) traverse the membrane as a helical segment. Residues 1406-1439 (YRNWDGKFGQIRLGEQGASTMEFFDADRPWVKYP) are Cytoplasmic-facing. A helical membrane pass occupies residues 1440–1460 (VIALSAVVALAGAMPLVLAAI). The Lumenal segment spans residues 1461-1525 (WRTAKNTAQR…LLGEESDEEV (65 aa)).

The protein belongs to the VPS10-related sortilin family.

Its subcellular location is the golgi apparatus. It is found in the trans-Golgi network membrane. It localises to the prevacuolar compartment membrane. In terms of biological role, functions as a sorting receptor in the Golgi compartment required for the intracellular sorting and delivery of soluble vacuolar proteins, like carboxypeptidase Y (CPY) and proteinase A. Executes multiple rounds of sorting by cycling between the late Golgi and a prevacuolar endosome-like compartment. The protein is Vacuolar protein sorting/targeting protein 10 (vps10) of Sordaria macrospora (strain ATCC MYA-333 / DSM 997 / K(L3346) / K-hell).